The sequence spans 279 residues: 4-diphosphocytidyl-2-C-methyl-D-erythritol kinase (279 aa).

The active site involves Lys11. 95-105 (PVAAGLGGGSS) is an ATP binding site. Asp137 is a catalytic residue.

Belongs to the GHMP kinase family. IspE subfamily.

The enzyme catalyses 4-CDP-2-C-methyl-D-erythritol + ATP = 4-CDP-2-C-methyl-D-erythritol 2-phosphate + ADP + H(+). It functions in the pathway isoprenoid biosynthesis; isopentenyl diphosphate biosynthesis via DXP pathway; isopentenyl diphosphate from 1-deoxy-D-xylulose 5-phosphate: step 3/6. Catalyzes the phosphorylation of the position 2 hydroxy group of 4-diphosphocytidyl-2C-methyl-D-erythritol. The sequence is that of 4-diphosphocytidyl-2-C-methyl-D-erythritol kinase from Geobacter sulfurreducens (strain ATCC 51573 / DSM 12127 / PCA).